Consider the following 159-residue polypeptide: uncharacterized protein (159 aa).

Residues 1–13 (MESRPSGRQHASE) show a composition bias toward basic and acidic residues. Residues 1–35 (MESRPSGRQHASEGDGDQSPTQCAGMRSSGRSDQP) form a disordered region.

This is an uncharacterized protein from Homo sapiens (Human).